Reading from the N-terminus, the 582-residue chain is ATP-dependent lipid A-core flippase (582 aa).

Transmembrane regions (helical) follow at residues 16–36 (LWPHISLYKAGLGVAVVALVI), 69–89 (FIILAMMFIRGLSGFVSGYCM), 153–173 (IIGLLGLMFWNSWQLSLVLVV), 250–270 (LANPIIQMIASFALVTVLYLA), and 275–295 (IKETLTPGTFTVVFSAMFGLL). Positions 29–310 (VAVVALVINA…LTSVTSDFQR (282 aa)) constitute an ABC transmembrane type-1 domain. The ABC transporter domain maps to 342–578 (IKVDNVTFTY…DGAYAQLHRI (237 aa)). 376–383 (GRSGSGKS) provides a ligand contact to ATP.

The protein belongs to the ABC transporter superfamily. Lipid exporter (TC 3.A.1.106) family. In terms of assembly, homodimer.

It localises to the cell inner membrane. The catalysed reaction is ATP + H2O + lipid A-core oligosaccharideSide 1 = ADP + phosphate + lipid A-core oligosaccharideSide 2.. In terms of biological role, involved in lipopolysaccharide (LPS) biosynthesis. Translocates lipid A-core from the inner to the outer leaflet of the inner membrane. Transmembrane domains (TMD) form a pore in the inner membrane and the ATP-binding domain (NBD) is responsible for energy generation. In Aliivibrio fischeri (strain ATCC 700601 / ES114) (Vibrio fischeri), this protein is ATP-dependent lipid A-core flippase.